The chain runs to 129 residues: Ig lambda-1 chain V region S43 (129 aa).

A signal peptide spans methionine 1 to serine 19. Pyrrolidone carboxylic acid is present on glutamine 20. The 106-residue stretch at glutamine 20–leucine 125 folds into the Ig-like domain.

The polypeptide is Ig lambda-1 chain V region S43 (Mus musculus (Mouse)).